Reading from the N-terminus, the 263-residue chain is Putative hydro-lyase BPUM_0381 (263 aa).

Belongs to the D-glutamate cyclase family.

The protein is Putative hydro-lyase BPUM_0381 of Bacillus pumilus (strain SAFR-032).